The following is a 198-amino-acid chain: ATP synthase subunit b (198 aa).

A helical membrane pass occupies residues 25–45 (PLSELLIGTLAFGLLVAFFFW).

This sequence belongs to the ATPase B chain family. F-type ATPases have 2 components, F(1) - the catalytic core - and F(0) - the membrane proton channel. F(1) has five subunits: alpha(3), beta(3), gamma(1), delta(1), epsilon(1). F(0) has three main subunits: a(1), b(2) and c(10-14). The alpha and beta chains form an alternating ring which encloses part of the gamma chain. F(1) is attached to F(0) by a central stalk formed by the gamma and epsilon chains, while a peripheral stalk is formed by the delta and b chains.

The protein resides in the cell membrane. Its function is as follows. F(1)F(0) ATP synthase produces ATP from ADP in the presence of a proton or sodium gradient. F-type ATPases consist of two structural domains, F(1) containing the extramembraneous catalytic core and F(0) containing the membrane proton channel, linked together by a central stalk and a peripheral stalk. During catalysis, ATP synthesis in the catalytic domain of F(1) is coupled via a rotary mechanism of the central stalk subunits to proton translocation. In terms of biological role, component of the F(0) channel, it forms part of the peripheral stalk, linking F(1) to F(0). The polypeptide is ATP synthase subunit b (Frankia alni (strain DSM 45986 / CECT 9034 / ACN14a)).